The primary structure comprises 177 residues: N-acetylmuramoyl-L-alanine amidase A (177 aa).

In terms of domain architecture, N-acetylmuramoyl-L-alanine amidase spans 23–158; it reads QTSAVIMHTM…SGNENRYDPG (136 aa). Residues Cys114 and Cys121 are joined by a disulfide bond.

Its subcellular location is the secreted. It catalyses the reaction Hydrolyzes the link between N-acetylmuramoyl residues and L-amino acid residues in certain cell-wall glycopeptides.. Functionally, antibacterial activity against Gram-positive bacteria M.luteus, S.aureus, E.faecalis and P.acidilactici and Gram-negative bacterium E.coli. This chain is N-acetylmuramoyl-L-alanine amidase A (cwhA), found in Achromobacter lyticus.